A 147-amino-acid chain; its full sequence is CRISP-1 (147 aa).

Belongs to the CRISP family. As to expression, expressed by the venom gland.

It localises to the secreted. This is CRISP-1 from Phoneutria keyserlingi (Brazilian wandering spider).